The sequence spans 83 residues: RNA-binding protein Hfq (83 aa).

One can recognise a Sm domain in the interval 11 to 71; the sequence is DTFLNFVRKN…ISTIMPGQPI (61 aa).

This sequence belongs to the Hfq family. Homohexamer.

Its function is as follows. RNA chaperone that binds small regulatory RNA (sRNAs) and mRNAs to facilitate mRNA translational regulation in response to envelope stress, environmental stress and changes in metabolite concentrations. Also binds with high specificity to tRNAs. The sequence is that of RNA-binding protein Hfq from Methylocella silvestris (strain DSM 15510 / CIP 108128 / LMG 27833 / NCIMB 13906 / BL2).